We begin with the raw amino-acid sequence, 184 residues long: MVNIIMVLYSIFLFLPAFIANPGAVITGGHFILDRGKTIHGKRILGDGKSLSGFIGGSLIGVLAGIIVYYIIYISNIGLGNYGNNIISALPVLFAMSFGSLTGDITGSFIKRRLGMKRGAKGSLLDQWPFVLMSFLFIFIFARHFFLEFYGNFIAIILILVLTPPLHRGVNILGYKLKMKDVPW.

5 consecutive transmembrane segments (helical) span residues 4–24 (IIMV…NPGA), 54–74 (FIGG…IIYI), 86–106 (IISA…GDIT), 122–142 (GSLL…FIFA), and 145–165 (FFLE…LTPP).

Belongs to the CDP-archaeol synthase family. Mg(2+) serves as cofactor.

It localises to the cell membrane. The catalysed reaction is 2,3-bis-O-(geranylgeranyl)-sn-glycerol 1-phosphate + CTP + H(+) = CDP-2,3-bis-O-(geranylgeranyl)-sn-glycerol + diphosphate. The protein operates within membrane lipid metabolism; glycerophospholipid metabolism. Catalyzes the formation of CDP-2,3-bis-(O-geranylgeranyl)-sn-glycerol (CDP-archaeol) from 2,3-bis-(O-geranylgeranyl)-sn-glycerol 1-phosphate (DGGGP) and CTP. This reaction is the third ether-bond-formation step in the biosynthesis of archaeal membrane lipids. The protein is CDP-archaeol synthase of Picrophilus torridus (strain ATCC 700027 / DSM 9790 / JCM 10055 / NBRC 100828 / KAW 2/3).